Consider the following 1218-residue polypeptide: Protein dispatched (1218 aa).

Residues 21–41 form a helical membrane-spanning segment; it reads YLVVVSIAVYCVACIIVALVL. Residues 99-135 form a disordered region; that stretch reads VETKLHPNHRRRKNKHKNRNKNKRRKEQNQSSHEHHD. Positions 104–124 are enriched in basic residues; the sequence is HPNHRRRKNKHKNRNKNKRRK. N-linked (GlcNAc...) asparagine glycans are attached at residues N127, N176, N197, N264, N319, and N388. The 195-residue stretch at 430–624 folds into the SSD domain; sequence AMDLGLENEL…ITWLPASVSI (195 aa). The next 6 helical transmembrane spans lie at 443–463, 473–493, 504–524, 570–590, 598–618, and 670–690; these read LLLT…ASVW, LMSC…YAIV, LLAV…FLKI, AAAS…ASYS, CFGI…ITWL, and AYLW…IVFW. N767, N883, and N891 each carry an N-linked (GlcNAc...) asparagine glycan. Helical transmembrane passes span 975–995, 996–1016, 1019–1039, 1058–1078, and 1087–1107; these read LAVL…VLTV, SLSI…LNIL, IAVS…GIHY, IIGP…IMMA, and IGVF…FFLM.

Belongs to the dispatched family.

It is found in the membrane. Functionally, segment polarity protein which functions in hedgehog (Hh) signaling. Regulates the trafficking and the release of cholesterol-modified hedgehog protein from cells of the posterior compartment (P cells) and is hence required for the effective production of the Hh signal. In Drosophila melanogaster (Fruit fly), this protein is Protein dispatched (disp).